Here is a 183-residue protein sequence, read N- to C-terminus: Ferritin heavy polypeptide-like 17 (183 aa).

A Ferritin-like diiron domain is found at 11–160 (QKYDTNCDAA…GYVSNLRKIC (150 aa)). Fe cation is bound by residues Glu28, His66, Glu108, and Gln142.

It belongs to the ferritin family. Testis specific. Also expressed in several cancers.

The sequence is that of Ferritin heavy polypeptide-like 17 (FTHL17) from Homo sapiens (Human).